A 364-amino-acid chain; its full sequence is Probable dual-specificity RNA methyltransferase RlmN (364 aa).

Glu107 functions as the Proton acceptor in the catalytic mechanism. In terms of domain architecture, Radical SAM core spans 113–346 (HEYGNSVCVT…ATIRREQGSD (234 aa)). A disulfide bridge connects residues Cys120 and Cys351. [4Fe-4S] cluster-binding residues include Cys127, Cys131, and Cys134. S-adenosyl-L-methionine is bound by residues 177–178 (GE), Ser209, 232–234 (SLH), and Asn308. Cys351 functions as the S-methylcysteine intermediate in the catalytic mechanism.

Belongs to the radical SAM superfamily. RlmN family. [4Fe-4S] cluster serves as cofactor.

It localises to the cytoplasm. It catalyses the reaction adenosine(2503) in 23S rRNA + 2 reduced [2Fe-2S]-[ferredoxin] + 2 S-adenosyl-L-methionine = 2-methyladenosine(2503) in 23S rRNA + 5'-deoxyadenosine + L-methionine + 2 oxidized [2Fe-2S]-[ferredoxin] + S-adenosyl-L-homocysteine. The enzyme catalyses adenosine(37) in tRNA + 2 reduced [2Fe-2S]-[ferredoxin] + 2 S-adenosyl-L-methionine = 2-methyladenosine(37) in tRNA + 5'-deoxyadenosine + L-methionine + 2 oxidized [2Fe-2S]-[ferredoxin] + S-adenosyl-L-homocysteine. Its function is as follows. Specifically methylates position 2 of adenine 2503 in 23S rRNA and position 2 of adenine 37 in tRNAs. Confers resistance to some classes of antibiotics. The chain is Probable dual-specificity RNA methyltransferase RlmN from Staphylococcus carnosus (strain TM300).